A 172-amino-acid chain; its full sequence is Large ribosomal subunit protein bL17 (172 aa).

Residues L140–P160 show a composition bias toward basic and acidic residues. Residues L140–N172 are disordered.

It belongs to the bacterial ribosomal protein bL17 family. Part of the 50S ribosomal subunit. Contacts protein L32.

The sequence is that of Large ribosomal subunit protein bL17 from Leptospira biflexa serovar Patoc (strain Patoc 1 / Ames).